The primary structure comprises 455 residues: Probable ATP-dependent RNA helicase DDX47 (455 aa).

The interval 1–21 is disordered; sequence MAADEEPDSPSGALQTAAEEE. Ala-2 is modified (N-acetylalanine). Phosphoserine is present on Ser-9. A Q motif motif is present at residues 24-52; sequence KTFKDLGVTDVLCEACDQLGWAKPTKIQI. The region spanning 55-226 is the Helicase ATP-binding domain; the sequence is IPLALQGRDI…RAALKNPVKC (172 aa). 68–75 is an ATP binding site; that stretch reads AETGSGKT. Phosphothreonine is present on Thr-149. The DEAD box signature appears at 174–177; sequence DEAD. Residues 237-397 form the Helicase C-terminal domain; sequence KLQQYYLFIP…VFPTQDEEVM (161 aa). The disordered stretch occupies residues 412–455; the sequence is MELREHGEKKKRKREDAGDDDDKEGAIGVRNKVAGGKMKKRKGR.

This sequence belongs to the DEAD box helicase family. DDX47/RRP3 subfamily. Interacts with AGO1 and AGO2. Interacts with GABARAP. Interacts with NOL8; the interaction is RNA-dependent.

It is found in the nucleus. The protein resides in the nucleolus. The enzyme catalyses ATP + H2O = ADP + phosphate + H(+). Its function is as follows. Involved in apoptosis. May have a role in rRNA processing and mRNA splicing. Associates with pre-rRNA precursors. This is Probable ATP-dependent RNA helicase DDX47 (Ddx47) from Mus musculus (Mouse).